The primary structure comprises 202 residues: Glycerol-3-phosphate acyltransferase (202 aa).

6 consecutive transmembrane segments (helical) span residues 2–22, 54–74, 85–105, 120–140, 141–161, and 162–182; these read MIIV…GFVI, FLVT…PLWL, FFTN…YPVY, VVLG…FIVL, KIFK…VIGS, and LIIQ…ILII.

It belongs to the PlsY family. Probably interacts with PlsX.

It is found in the cell membrane. The enzyme catalyses an acyl phosphate + sn-glycerol 3-phosphate = a 1-acyl-sn-glycero-3-phosphate + phosphate. It participates in lipid metabolism; phospholipid metabolism. Functionally, catalyzes the transfer of an acyl group from acyl-phosphate (acyl-PO(4)) to glycerol-3-phosphate (G3P) to form lysophosphatidic acid (LPA). This enzyme utilizes acyl-phosphate as fatty acyl donor, but not acyl-CoA or acyl-ACP. The protein is Glycerol-3-phosphate acyltransferase of Staphylococcus aureus (strain USA300).